The sequence spans 415 residues: Lupus La protein homolog (415 aa).

The HTH La-type RNA-binding domain occupies 7-99 (NEKMAALEAK…RRSPSRPLPE (93 aa)). Ser92 and Ser94 each carry phosphoserine. An RRM domain is found at 111–187 (RSVYIKGFPT…TNLLILFKED (77 aa)). Position 116 is an N6-acetyllysine (Lys116). Residue Thr120 is modified to Phosphothreonine. N6-acetyllysine occurs at positions 128 and 327. Positions 226 to 343 (EGKMGCLLKF…HAARRFKGSH (118 aa)) constitute a xRRM domain. A disordered region spans residues 323–415 (ESLNKWKSKG…KKRENGARDK (93 aa)). Residues 328–341 (WKSKGGHAARRFKG) are compositionally biased toward basic residues. Lys356 carries the post-translational modification N6-acetyllysine. The residue at position 377 (Thr377) is a Phosphothreonine. The span at 377–415 (TRFDDDDHRRGPVKRGIDGRDREEPASKHKKRENGARDK) shows a compositional bias: basic and acidic residues.

Interacts with DDX15. May interact with RUFY1. Post-translationally, phosphorylated.

It is found in the nucleus. Its function is as follows. Binds to the 3' poly(U) terminus of nascent RNA polymerase III transcripts, protecting them from exonuclease digestion and facilitating their folding and maturation. This is Lupus La protein homolog (Ssb) from Rattus norvegicus (Rat).